Here is a 1906-residue protein sequence, read N- to C-terminus: Retinoic acid-induced protein 1 (1906 aa).

6 disordered regions span residues Met-1 to Gln-261, Arg-273 to Ala-299, Tyr-335 to Phe-370, Val-469 to Gly-520, Ser-538 to Ser-571, and Ser-656 to Pro-712. A compositionally biased stretch (polar residues) spans Lys-13–Thr-24. Low complexity predominate over residues Pro-66 to Ala-75. Residues Pro-124 to Leu-134 show a composition bias toward pro residues. Over residues Ser-213–Val-226 the composition is skewed to low complexity. The span at Thr-252–Gln-261 shows a compositional bias: polar residues. 2 stretches are compositionally biased toward low complexity: residues Gln-278 to Gln-291 and Ser-339 to Ser-353. Phosphoserine is present on residues Ser-339 and Ser-345. At Thr-472 the chain carries Phosphothreonine. Positions Arg-541 to Asp-563 are enriched in polar residues. Residues Ser-568 and Ser-683 each carry the phosphoserine modification. A Phosphothreonine modification is found at Thr-696. Residue Ser-805 is modified to Phosphoserine. Lys-811 is covalently cross-linked (Glycyl lysine isopeptide (Lys-Gly) (interchain with G-Cter in SUMO2)). Residue Lys-819 forms a Glycyl lysine isopeptide (Lys-Gly) (interchain with G-Cter in SUMO1) linkage. 2 positions are modified to phosphoserine: Ser-880 and Ser-892. Lys-901 participates in a covalent cross-link: Glycyl lysine isopeptide (Lys-Gly) (interchain with G-Cter in SUMO1); alternate. Lys-901 is covalently cross-linked (Glycyl lysine isopeptide (Lys-Gly) (interchain with G-Cter in SUMO2); alternate). Polar residues predominate over residues Lys-937 to Ser-947. 5 disordered regions span residues Lys-937–Asp-1299, Phe-1344–Pro-1570, Val-1613–Ser-1637, Ala-1746–Gly-1775, and Glu-1794–Ala-1819. A compositionally biased stretch (basic and acidic residues) spans Lys-950–Pro-962. The segment covering Lys-996 to Arg-1005 has biased composition (basic residues). Ser-1064 is modified (phosphoserine). Phosphothreonine is present on Thr-1068. The segment covering Pro-1101–Ser-1119 has biased composition (low complexity). Phosphoserine is present on Ser-1122. 2 short sequence motifs (nuclear localization signal) span residues Arg-1160–Leu-1177 and Lys-1223–Val-1240. Positions Arg-1242–Ser-1252 are enriched in low complexity. Ser-1352, Ser-1358, and Ser-1374 each carry phosphoserine. Residue Lys-1425 forms a Glycyl lysine isopeptide (Lys-Gly) (interchain with G-Cter in SUMO2) linkage. Position 1431 is a phosphoserine (Ser-1431). A compositionally biased stretch (basic residues) spans Pro-1444–Ala-1453. Polar residues-rich tracts occupy residues Ser-1482 to Asn-1491 and Gln-1517 to Tyr-1534. Positions Ser-1535–Ala-1545 are enriched in basic residues. A compositionally biased stretch (low complexity) spans Ser-1628 to Ser-1637. The segment at Leu-1780–Val-1835 adopts a C2HC pre-PHD-type zinc-finger fold. Over residues Pro-1798 to Pro-1812 the composition is skewed to basic and acidic residues. The PHD-type zinc finger occupies Met-1855 to Lys-1903.

Expressed in all tissues examined with higher expression in the heart and brain. No expression was seen in the corpus callosum of the brain.

It is found in the cytoplasm. It localises to the nucleus. Transcriptional regulator of the circadian clock components: CLOCK, BMAL1, BMAL2, PER1/3, CRY1/2, NR1D1/2 and RORA/C. Positively regulates the transcriptional activity of CLOCK a core component of the circadian clock. Regulates transcription through chromatin remodeling by interacting with other proteins in chromatin as well as proteins in the basic transcriptional machinery. May be important for embryonic and postnatal development. May be involved in neuronal differentiation. The protein is Retinoic acid-induced protein 1 (RAI1) of Homo sapiens (Human).